A 515-amino-acid chain; its full sequence is Envelope glycoprotein (515 aa).

The first 33 residues, 1–33 (MPKERRSRRRPEPIIRWVSLTLTLLALCQPIQT), serve as a signal peptide directing secretion. Residues 34–435 (WRCSLSLGNQ…LGLTAWVRET (402 aa)) are Extracellular-facing. N-linked (GlcNAc...) asparagine; by host glycosylation is found at N129 and N203. Positions 212 to 215 (CAIC) match the CXXC motif. 3 cysteine pairs are disulfide-bonded: C212–C215, C212–C392, and C384–C391. 5 N-linked (GlcNAc...) asparagine; by host glycosylation sites follow: N230, N251, N256, N271, and N287. Positions 304 to 324 (VAALTLGLALSVGLTGIKVAV) are fusion peptide. Coiled-coil stretches lie at residues 330 to 376 (QRLT…WLYI) and 388 to 420 (NEPC…DWQW). Residue N351 is glycosylated (N-linked (GlcNAc...) asparagine; by host). The interval 365-381 (AQNRRGLDWLYIRLGFQ) is immunosuppression. The CX6CC motif lies at 384–392 (CPTINEPCC). An N-linked (GlcNAc...) asparagine; by host glycan is attached at N398. Residues 436-456 (IHSVLSLFLLALLLLFLAPCL) traverse the membrane as a helical segment. The S-palmitoyl cysteine; by host moiety is linked to residue C455. Topologically, residues 457 to 515 (IKCLTSRLSKLLRQAPHFPEISFPPKPDSDYQALLPSAPEIYSHLSPTKPDYINLRPCP) are cytoplasmic.

As to quaternary structure, the mature envelope protein (Env) consists of a trimer of SU-TM heterodimers attached by a labile interchain disulfide bond. In terms of processing, specific enzymatic cleavages in vivo yield mature proteins. Envelope glycoproteins are synthesized as an inactive precursor that is N-glycosylated and processed likely by host cell furin or by a furin-like protease in the Golgi to yield the mature SU and TM proteins. The cleavage site between SU and TM requires the minimal sequence [KR]-X-[KR]-R. Post-translationally, the CXXC motif is highly conserved across a broad range of retroviral envelope proteins. It is thought to participate in the formation of a labile disulfide bond possibly with the CX6CC motif present in the transmembrane protein. Isomerization of the intersubunit disulfide bond to an SU intrachain disulfide bond is thought to occur upon receptor recognition in order to allow membrane fusion. The transmembrane protein is palmitoylated.

The protein resides in the virion membrane. The protein localises to the host cell membrane. Its function is as follows. The surface protein (SU) attaches the virus to the host cell by binding to its receptor. This interaction triggers the refolding of the transmembrane protein (TM) and is thought to activate its fusogenic potential by unmasking its fusion peptide. Fusion occurs at the host cell plasma membrane. Functionally, the transmembrane protein (TM) acts as a class I viral fusion protein. Under the current model, the protein has at least 3 conformational states: pre-fusion native state, pre-hairpin intermediate state, and post-fusion hairpin state. During viral and target cell membrane fusion, the coiled coil regions (heptad repeats) assume a trimer-of-hairpins structure, positioning the fusion peptide in close proximity to the C-terminal region of the ectodomain. The formation of this structure appears to drive apposition and subsequent fusion of viral and target cell membranes. Membranes fusion leads to delivery of the nucleocapsid into the cytoplasm. In Bovine leukemia virus (isolate Australian) (BLV), this protein is Envelope glycoprotein (env).